A 400-amino-acid chain; its full sequence is Elongation factor Tu (400 aa).

Positions lysine 10–glutamate 209 constitute a tr-type G domain. The segment at glycine 19–threonine 26 is G1. Glycine 19 to threonine 26 contributes to the GTP binding site. Residue threonine 26 participates in Mg(2+) binding. Residues glycine 60–asparagine 64 are G2. Residues aspartate 81–glycine 84 form a G3 region. GTP contacts are provided by residues aspartate 81–histidine 85 and asparagine 136–aspartate 139. A G4 region spans residues asparagine 136–aspartate 139. The G5 stretch occupies residues serine 174–leucine 176.

It belongs to the TRAFAC class translation factor GTPase superfamily. Classic translation factor GTPase family. EF-Tu/EF-1A subfamily. Monomer.

It is found in the cytoplasm. The enzyme catalyses GTP + H2O = GDP + phosphate + H(+). Its function is as follows. GTP hydrolase that promotes the GTP-dependent binding of aminoacyl-tRNA to the A-site of ribosomes during protein biosynthesis. This is Elongation factor Tu from Desulforamulus reducens (strain ATCC BAA-1160 / DSM 100696 / MI-1) (Desulfotomaculum reducens).